The sequence spans 88 residues: UPF0297 protein LACR_0137 (88 aa).

It belongs to the UPF0297 family.

This Lactococcus lactis subsp. cremoris (strain SK11) protein is UPF0297 protein LACR_0137.